Here is a 192-residue protein sequence, read N- to C-terminus: RNA pyrophosphohydrolase (192 aa).

The 144-residue stretch at 6–149 (GYRPNVGIVI…KKDVYRKVMK (144 aa)) folds into the Nudix hydrolase domain. A Nudix box motif is present at residues 38–59 (GGINDNETAEQAMYRELYEEAG).

The protein belongs to the Nudix hydrolase family. RppH subfamily. A divalent metal cation is required as a cofactor.

Accelerates the degradation of transcripts by removing pyrophosphate from the 5'-end of triphosphorylated RNA, leading to a more labile monophosphorylated state that can stimulate subsequent ribonuclease cleavage. The chain is RNA pyrophosphohydrolase from Histophilus somni (strain 129Pt) (Haemophilus somnus).